Consider the following 148-residue polypeptide: uncharacterized protein (148 aa).

This is an uncharacterized protein from Methanothermobacter thermautotrophicus (Methanobacterium thermoformicicum).